The following is a 500-amino-acid chain: Keratin, type II cuticular Hb1 (500 aa).

A head region spans residues 1 to 106 (MTCGSGFRGR…PNAQCVKQEE (106 aa)). The region spanning 106–417 (EKEQIKCLNN…RLLEGEEQRL (312 aa)) is the IF rod domain. Residues 107 to 141 (KEQIKCLNNRFAAFIDKVRFLEQQNKLLETKLQFY) form a coil 1A region. Residues 142–151 (QNRQCCESNL) are linker 1. The tract at residues 152–252 (EPLFNGYIET…YEEEIRVLQA (101 aa)) is coil 1B. Lys212 is covalently cross-linked (Glycyl lysine isopeptide (Lys-Gly) (interchain with G-Cter in SUMO1)). The linker 12 stretch occupies residues 253 to 269 (HISDTSVIVKMDNSRDL). Positions 270-413 (NMDNIVAEIK…ATYRRLLEGE (144 aa)) are coil 2. Positions 414 to 500 (EQRLCEGVGS…GSCASVCRKC (87 aa)) are tail.

This sequence belongs to the intermediate filament family. Heterotetramer of two type I and two type II keratins.

The polypeptide is Keratin, type II cuticular Hb1 (Bos taurus (Bovine)).